A 397-amino-acid polypeptide reads, in one-letter code: S-adenosylmethionine synthase (397 aa).

Residue H17 coordinates ATP. D19 serves as a coordination point for Mg(2+). E45 lines the K(+) pocket. E58 and Q101 together coordinate L-methionine. The flexible loop stretch occupies residues 101-111 (QSPDIAQGVDK). ATP-binding positions include 176–178 (DGK), 243–244 (RF), D252, 258–259 (RK), and K279. An L-methionine-binding site is contributed by D252. K283 is an L-methionine binding site.

It belongs to the AdoMet synthase family. Homotetramer; dimer of dimers. Requires Mg(2+) as cofactor. It depends on K(+) as a cofactor.

The protein localises to the cytoplasm. It carries out the reaction L-methionine + ATP + H2O = S-adenosyl-L-methionine + phosphate + diphosphate. It participates in amino-acid biosynthesis; S-adenosyl-L-methionine biosynthesis; S-adenosyl-L-methionine from L-methionine: step 1/1. Its function is as follows. Catalyzes the formation of S-adenosylmethionine (AdoMet) from methionine and ATP. The overall synthetic reaction is composed of two sequential steps, AdoMet formation and the subsequent tripolyphosphate hydrolysis which occurs prior to release of AdoMet from the enzyme. This chain is S-adenosylmethionine synthase, found in Staphylococcus aureus (strain USA300).